Consider the following 232-residue polypeptide: Ribose-5-phosphate isomerase A (232 aa).

Residues 28-31, 83-86, and 96-99 each bind substrate; these read TGST, DGAD, and KGGG. The active-site Proton acceptor is the Glu105. Residue Lys123 coordinates substrate.

The protein belongs to the ribose 5-phosphate isomerase family. Homodimer.

The catalysed reaction is aldehydo-D-ribose 5-phosphate = D-ribulose 5-phosphate. It participates in carbohydrate degradation; pentose phosphate pathway; D-ribose 5-phosphate from D-ribulose 5-phosphate (non-oxidative stage): step 1/1. Its function is as follows. Catalyzes the reversible conversion of ribose-5-phosphate to ribulose 5-phosphate. The polypeptide is Ribose-5-phosphate isomerase A (Rhodopseudomonas palustris (strain BisB5)).